Reading from the N-terminus, the 601-residue chain is Arginine--tRNA ligase (601 aa).

The 'HIGH' region signature appears at 133-143 (PNTNKPLHLGH).

This sequence belongs to the class-I aminoacyl-tRNA synthetase family. In terms of assembly, monomer.

The protein localises to the cytoplasm. The enzyme catalyses tRNA(Arg) + L-arginine + ATP = L-arginyl-tRNA(Arg) + AMP + diphosphate. This is Arginine--tRNA ligase from Flavobacterium psychrophilum (strain ATCC 49511 / DSM 21280 / CIP 103535 / JIP02/86).